The following is a 617-amino-acid chain: Pentatricopeptide repeat-containing protein At4g18520, chloroplastic (617 aa).

Residues 1–19 (MFSLSLIQPRLRISEIPVT) constitute a chloroplast transit peptide. PPR repeat units lie at residues 116-146 (VIYFGNNLISSCVRLGDLVYARKVFDSMPEK), 147-181 (NTVTWTAMIDGYLKYGLEDEAFALFEDYVKHGIRF), 183-217 (NERMFVCLLNLCSRRAEFELGRQVHGNMVKVGVGN), 222-247 (SSLVYFYAQCGELTSALRAFDMMEEK), 248-282 (DVISWTAVISACSRKGHGIKAIGMFIGMLNHWFLP), 283-317 (NEFTVCSILKACSEEKALRFGRQVHSLVVKRMIKT), 318-348 (DVFVGTSLMDMYAKCGEISDCRKVFDGMSNR), 349-383 (NTVTWTSIIAAHAREGFGEEAISLFRIMKRRHLIA), 384-418 (NNLTVVSILRACGSVGALLLGKELHAQIIKNSIEK), 419-449 (NVYIGSTLVWLYCKCGESRDAFNVLQQLPSR), 450-484 (DVVSWTAMISGCSSLGHESEALDFLKEMIQEGVEP), 485-519 (NPFTYSSALKACANSESLLIGRSIHSIAKKNHALS), 520-550 (NVFVGSALIHMYAKCGFVSEAFRVFDSMPEK), and 551-585 (NLVSWKAMIMGYARNGFCREALKLMYRMEAEGFEV).

The protein belongs to the PPR family. PCMP-A subfamily. In terms of assembly, interacts with MORF8/RIP1, MORF2/RIP2 and MORF9/RIP9. In terms of tissue distribution, expressed specifically in aerial greening tissues, such as cotyledons, rosette leaves, cauline leaves, stems, sepals, stamens, carpels and siliques.

The protein localises to the plastid. Its subcellular location is the chloroplast. In terms of biological role, required for proper chloroplast development. Involved in the regulation of plastid gene expression probably through regulation of plastid-encoded polymerase (PEP) dependent chloroplast transcription. Required for RNA editing of several chloroplastic transcripts, especially accD transcripts. Required for processing of the chloroplastic rpoA pre-mRNA. Required for the monocistronic rpoA transcript processing from the rpl23-rpl2-rps19-rpl22-rps3-rpl16-rpl14-rps8-rpl36-rps11-rpoA polycistron. Binds the intergenic sequence of rps11-rpoA for rpoA monocistronic RNA cleavage. The chain is Pentatricopeptide repeat-containing protein At4g18520, chloroplastic (PCMP-A2) from Arabidopsis thaliana (Mouse-ear cress).